The primary structure comprises 538 residues: Syncytin-1 (538 aa).

Residues 1 to 20 form the signal peptide; the sequence is MALPYHIFLFTVLLPSFTLT. The Extracellular portion of the chain corresponds to 21-443; that stretch reads APPPCRCMTS…NTGPWGLLSQ (423 aa). Asparagine 169 carries N-linked (GlcNAc...) asparagine glycosylation. A CXXC motif is present at residues 186–189; it reads CWIC. 3 disulfide bridges follow: cysteine 186–cysteine 189, cysteine 186–cysteine 405, and cysteine 397–cysteine 404. 5 N-linked (GlcNAc...) asparagine glycosylation sites follow: asparagine 208, asparagine 214, asparagine 234, asparagine 242, and asparagine 281. A fusion peptide region spans residues 320–340; that stretch reads ILPFVIGAGVLGALGTGIGGI. Residues 380–396 form an immunosuppression region; sequence LQNRRALDLLTAERGGT. The CX6CC motif lies at 397–406; sequence CLFLGEECCY. Residue asparagine 409 is glycosylated (N-linked (GlcNAc...) asparagine). A helical membrane pass occupies residues 444-464; sequence WMPWILPFLGPLAAIILLLLF. The interval 465-484 is essential for the fusiogenic function; it reads GPCIFNLLVNFVSSRIEAVK. Residues 465-538 lie on the Cytoplasmic side of the membrane; sequence GPCIFNLLVN…LLRPNSAGSS (74 aa). The tract at residues 496-538 is disordered; the sequence is KIYRRPLDRPASPRSDVNDIKGTPPEEISAAQPLLRPNSAGSS.

This sequence belongs to the gamma type-C retroviral envelope protein family. HERV class-I W env subfamily. As to quaternary structure, the mature envelope protein (Env) consists of a trimer of SU-TM heterodimers attached probably by a labile interchain disulfide bond. Interacts with the C-type lectin CD209/DC-SIGN. Post-translationally, specific enzymatic cleavages in vivo yield mature proteins. Envelope glycoproteins are synthesized as an inactive precursor that is heavily N-glycosylated and processed likely by furin in the Golgi to yield the mature SU and TM proteins. The cleavage site between SU and TM requires the minimal sequence [KR]-X-[KR]-R. The intracytoplasmic tail cleavage by the viral protease that is required for the fusiogenic activity of some retroviruses envelope proteins seems to have been lost during evolution. The CXXC motif is highly conserved across a broad range of retroviral envelope proteins. It is thought to participate in the formation of a labile disulfide bond possibly with the CX6CC motif present in the transmembrane protein. Isomerization of the intersubunit disulfide bond to an SU intrachain disulfide bond is thought to occur upon receptor recognition in order to allow membrane fusion. As to expression, expressed at higher level in placental syncytiotrophoblast. Expressed at intermediate level in testis. Seems also to be found at low level in adrenal tissue, bone marrow, breast, colon, kidney, ovary, prostate, skin, spleen, thymus, thyroid, brain and trachea. Both mRNA and protein levels are significantly increased in the brain of individuals with multiple sclerosis, particularly in astrocytes and microglia.

It is found in the cell membrane. The protein localises to the virion. In terms of biological role, this endogenous retroviral envelope protein has retained its original fusogenic properties and participates in trophoblast fusion and the formation of a syncytium during placenta morphogenesis. May induce fusion through binding of SLC1A4 and SLC1A5. Endogenous envelope proteins may have kept, lost or modified their original function during evolution. Retroviral envelope proteins mediate receptor recognition and membrane fusion during early infection. The surface protein (SU) mediates receptor recognition, while the transmembrane protein (TM) acts as a class I viral fusion protein. The protein may have at least 3 conformational states: pre-fusion native state, pre-hairpin intermediate state, and post-fusion hairpin state. During viral and target cell membrane fusion, the coiled coil regions (heptad repeats) assume a trimer-of-hairpins structure, positioning the fusion peptide in close proximity to the C-terminal region of the ectodomain. The formation of this structure appears to drive apposition and subsequent fusion of membranes. The chain is Syncytin-1 (ERVW-1) from Homo sapiens (Human).